Here is a 297-residue protein sequence, read N- to C-terminus: 2-dehydropantoate 2-reductase (297 aa).

NADP(+) is bound by residues 11–16 (GAGAMG), N107, and A133. N107 provides a ligand contact to substrate. Catalysis depends on K187, which acts as the Proton donor. Positions 191, 195, 205, and 251 each coordinate substrate. Residue E263 coordinates NADP(+).

It belongs to the ketopantoate reductase family.

It localises to the cytoplasm. It carries out the reaction (R)-pantoate + NADP(+) = 2-dehydropantoate + NADPH + H(+). The protein operates within cofactor biosynthesis; (R)-pantothenate biosynthesis; (R)-pantoate from 3-methyl-2-oxobutanoate: step 2/2. Functionally, catalyzes the NADPH-dependent reduction of ketopantoate into pantoic acid. This chain is 2-dehydropantoate 2-reductase, found in Listeria monocytogenes serovar 1/2a (strain ATCC BAA-679 / EGD-e).